We begin with the raw amino-acid sequence, 507 residues long: Fumarate hydratase, mitochondrial (507 aa).

A mitochondrion-targeting transit peptide spans 1-41 (MYRALRLLARSRRLLRVPSAGAAVSGEATTLPRCAPNVARM). N6-acetyllysine; alternate occurs at positions 58, 63, and 77. Residues Lys-58, Lys-63, and Lys-77 each carry the N6-succinyllysine; alternate modification. A Phosphothreonine modification is found at Thr-82. Residues Lys-112 and Lys-119 each carry the N6-acetyllysine; alternate modification. Residues Lys-112 and Lys-119 each carry the N6-succinyllysine; alternate modification. Residues 142–144 (SGT), 173–176 (HPND), and 183–185 (SSN) each bind substrate. Lys-210 bears the N6-acetyllysine mark. Lys-220 bears the N6-acetyllysine; alternate mark. Lys-220 is modified (N6-succinyllysine; alternate). Substrate is bound at residue Thr-231. The active-site Proton donor/acceptor is the His-232. Thr-233 carries the post-translational modification Phosphothreonine. Lys-289 is modified (N6-acetyllysine; alternate). N6-succinyllysine; alternate is present on Lys-289. Residue Ser-362 is part of the active site. Substrate-binding positions include Ser-363 and 368–370 (KVN). Ser-363 carries the phosphoserine modification. 2 positions are modified to N6-succinyllysine: Lys-464 and Lys-470. Residue Lys-499 is modified to N6-acetyllysine.

The protein belongs to the class-II fumarase/aspartase family. Fumarase subfamily. As to quaternary structure, homotetramer. Interacts with H2AZ1. Phosphorylation at Thr-233 by PRKDC in response to DNA damage promotes translocation to the nucleus and recruitment to DNA double-strand breaks (DSBs).

The protein localises to the mitochondrion. Its subcellular location is the cytoplasm. The protein resides in the cytosol. It localises to the nucleus. It is found in the chromosome. It carries out the reaction (S)-malate = fumarate + H2O. It functions in the pathway carbohydrate metabolism; tricarboxylic acid cycle; (S)-malate from fumarate: step 1/1. Functionally, catalyzes the reversible stereospecific interconversion of fumarate to L-malate. Experiments in different species have demonstrated that specific isoforms of this protein act in defined pathways and favor one direction over the other. In terms of biological role, catalyzes the hydration of fumarate to L-malate in the tricarboxylic acid (TCA) cycle to facilitate a transition step in the production of energy in the form of NADH. Its function is as follows. Catalyzes the dehydration of L-malate to fumarate. Fumarate metabolism in the cytosol plays a role during urea cycle and arginine metabolism; fumarate being a by-product of the urea cycle and amino-acid catabolism. Also plays a role in DNA repair by promoting non-homologous end-joining (NHEJ). In response to DNA damage and phosphorylation by PRKDC, translocates to the nucleus and accumulates at DNA double-strand breaks (DSBs): acts by catalyzing formation of fumarate, an inhibitor of KDM2B histone demethylase activity, resulting in enhanced dimethylation of histone H3 'Lys-36' (H3K36me2). The polypeptide is Fumarate hydratase, mitochondrial (Mus musculus (Mouse)).